The chain runs to 70 residues: Turripeptide Lol9.1 (70 aa).

An N-terminal signal peptide occupies residues 1-20 (MKVYCLLLVLLVGLVSQAHG). Residues 21–70 (KPTKRCLSVCSAEYEPVCGSDGKTYANKCHLMTEACWSPTSITLVHEGKC) enclose the Kazal-like domain. 3 disulfides stabilise this stretch: Cys26–Cys56, Cys30–Cys49, and Cys38–Cys70.

It belongs to the conopeptide P-like superfamily. In terms of tissue distribution, expressed by the venom duct.

Its subcellular location is the secreted. Its function is as follows. Acts as a neurotoxin by inhibiting an ion channel. May also act as a serine protease inhibitor, since it possess the kazal serine protease inhibitor signature. The polypeptide is Turripeptide Lol9.1 (Iotyrris olangoensis (Sea snail)).